The sequence spans 266 residues: ATP synthase subunit a (266 aa).

Transmembrane regions (helical) follow at residues Ile41–Ala61, Val98–Leu118, Val119–Leu139, Leu152–Leu172, His178–Ala198, Leu216–Trp236, and Ala237–Val257.

This sequence belongs to the ATPase A chain family. As to quaternary structure, F-type ATPases have 2 components, CF(1) - the catalytic core - and CF(0) - the membrane proton channel. CF(1) has five subunits: alpha(3), beta(3), gamma(1), delta(1), epsilon(1). CF(0) has three main subunits: a(1), b(2) and c(9-12). The alpha and beta chains form an alternating ring which encloses part of the gamma chain. CF(1) is attached to CF(0) by a central stalk formed by the gamma and epsilon chains, while a peripheral stalk is formed by the delta and b chains.

It localises to the cell inner membrane. Its function is as follows. Key component of the proton channel; it plays a direct role in the translocation of protons across the membrane. In Halorhodospira halophila (strain DSM 244 / SL1) (Ectothiorhodospira halophila (strain DSM 244 / SL1)), this protein is ATP synthase subunit a.